Consider the following 306-residue polypeptide: Pantothenate kinase (306 aa).

91 to 98 (GSVAVGKS) is a binding site for ATP.

Belongs to the prokaryotic pantothenate kinase family.

It is found in the cytoplasm. It catalyses the reaction (R)-pantothenate + ATP = (R)-4'-phosphopantothenate + ADP + H(+). It participates in cofactor biosynthesis; coenzyme A biosynthesis; CoA from (R)-pantothenate: step 1/5. This chain is Pantothenate kinase, found in Streptococcus pneumoniae serotype 19F (strain G54).